The following is a 459-amino-acid chain: MAYNYNMHTSSRVAIIGAGVSGLAAAKHLARHHPQVFEASDSIGGVWRKCTYETTKLQSVRVSYELSDFLWPNRGESSFPTYVDVLDYLEAYAKHFNLVKFIKFNSKVVELRFIGDGKTLQMGDLGAYGNLLPGKPVWEVAVNTGDGDIQWHAFEYVVVCAGKYGDVPRTPTFPVKKGPEIFKGKVLHSMDYSKLQKEKASQLLHGKKVAVIGFKKSAIDLALESALANQGKEGKTCTMVVRTPHWVIPHYWRATVSKFIESYVLWKLPLEKYGLKPDHAFEEDYASCQMALVPEKFFEEADKGMIRFKRTTNWWFYDEGIEFEDGTTLEADVVILATGYDGMKKLKAIVPEPFRSWLEFPWGIMPLYRGTIHPLIPNMGFIGYVQSSSNLKSSELHSRWLSQLLDGKFTLPSKEKMLDQFLKEMHVMRRSSRFFKNHCFSTFSIQHADDLSKDMNLKP.

FAD is bound by residues 17–21 (GAGVS), E38, and 46–47 (VW). 217–220 (SAID) contributes to the NADP(+) binding site.

Belongs to the FMO family. The cofactor is FAD.

This Arabidopsis thaliana (Mouse-ear cress) protein is Putative flavin-containing monooxygenase 2 (FMO2).